A 413-amino-acid polypeptide reads, in one-letter code: Terephthalate 1,2-dioxygenase, terminal oxygenase component subunit alpha 2 (413 aa).

In terms of domain architecture, Rieske spans 41–144; the sequence is NYLCLESEIP…CKEEHGPRKL (104 aa). [2Fe-2S] cluster-binding residues include Cys82, His84, Cys102, and His105.

This sequence belongs to the bacterial ring-hydroxylating dioxygenase alpha subunit family. As to quaternary structure, heterotetramer composed of 2 alpha (TphA2I and TphA2II) and 2 beta (TphA3I and TphA3II) subunits. Part of a multicomponent enzyme system composed of a reductase (TphA1I or TphA1II) and a two-subunit oxygenase component (TphA2I or TphA2II and TphA3I or TphA3II). Requires Fe cation as cofactor. It depends on [2Fe-2S] cluster as a cofactor.

It carries out the reaction terephthalate + NADH + O2 + H(+) = (3S,4R)-3,4-dihydroxycyclohexa-1,5-diene-1,4-dicarboxylate + NAD(+). With respect to regulation, inhibited by EDTA. Functionally, component of the terephthalate 1,2-dioxygenase multicomponent enzyme system which catalyzes the dioxygenation of terephthalate (TER/TPA) to 1,2-dihydroxy-3,5-cyclohexadiene-1,4-dicarboxylic acid (DCD). It can also use 2,5-dicarboxypyridine (PDC) and 1,4-napthalenedicarboxylic acid (NDC) as substrates, and preferentially uses NADPH which is the physiological electron donor. The polypeptide is Terephthalate 1,2-dioxygenase, terminal oxygenase component subunit alpha 2 (tphA2II) (Comamonas sp).